A 350-amino-acid polypeptide reads, in one-letter code: Glycosyltransferase 8 domain-containing protein 2 (350 aa).

At 1-6 (MALLRK) the chain is on the cytoplasmic side. Residues 7–24 (INQVLLFLLIVTLCGILY) form a helical; Signal-anchor for type II membrane protein membrane-spanning segment. Residues 25-349 (KKVHKGTMLR…AGIFKLHHPN (325 aa)) lie on the Lumenal side of the membrane. A glycan (N-linked (GlcNAc...) asparagine) is linked at Asn-234.

It belongs to the glycosyltransferase 8 family.

It is found in the membrane. The polypeptide is Glycosyltransferase 8 domain-containing protein 2 (GLT8D2) (Bos taurus (Bovine)).